We begin with the raw amino-acid sequence, 428 residues long: Dihydrolipoyllysine-residue acetyltransferase component of pyruvate dehydrogenase complex (428 aa).

In terms of domain architecture, Lipoyl-binding spans 2 to 77 (AFEFKLPDIG…TVGQTLITLD (76 aa)). K43 bears the N6-lipoyllysine mark. Positions 88-123 (GQEQEEAKKEEKTETVSKEEKVDAVAPNAPAAEAEA) are disordered. Residues 89–110 (QEQEEAKKEEKTETVSKEEKVD) are compositionally biased toward basic and acidic residues. Positions 111–123 (AVAPNAPAAEAEA) are enriched in low complexity. In terms of domain architecture, Peripheral subunit-binding (PSBD) spans 130-167 (IAMPSVRKYAREKGVDIRLVQGTGKNGRVLKEDIDAFL). Residues 177–194 (AAEEKAAPAAAKPATTEG) are compositionally biased toward low complexity. The tract at residues 177–201 (AAEEKAAPAAAKPATTEGEFPETRE) is disordered. Residue H399 is part of the active site.

It belongs to the 2-oxoacid dehydrogenase family. In terms of assembly, forms a 60-polypeptide structural core with icosahedral symmetry. (R)-lipoate serves as cofactor.

The enzyme catalyses N(6)-[(R)-dihydrolipoyl]-L-lysyl-[protein] + acetyl-CoA = N(6)-[(R)-S(8)-acetyldihydrolipoyl]-L-lysyl-[protein] + CoA. The pyruvate dehydrogenase complex catalyzes the overall conversion of pyruvate to acetyl-CoA and CO(2). It contains multiple copies of three enzymatic components: pyruvate dehydrogenase (E1), dihydrolipoamide acetyltransferase (E2) and lipoamide dehydrogenase (E3). The sequence is that of Dihydrolipoyllysine-residue acetyltransferase component of pyruvate dehydrogenase complex (pdhC) from Geobacillus stearothermophilus (Bacillus stearothermophilus).